A 124-amino-acid chain; its full sequence is Small ribosomal subunit protein uS12 (124 aa).

Aspartate 89 is subject to 3-methylthioaspartic acid.

The protein belongs to the universal ribosomal protein uS12 family. Part of the 30S ribosomal subunit. Contacts proteins S8 and S17. May interact with IF1 in the 30S initiation complex.

With S4 and S5 plays an important role in translational accuracy. In terms of biological role, interacts with and stabilizes bases of the 16S rRNA that are involved in tRNA selection in the A site and with the mRNA backbone. Located at the interface of the 30S and 50S subunits, it traverses the body of the 30S subunit contacting proteins on the other side and probably holding the rRNA structure together. The combined cluster of proteins S8, S12 and S17 appears to hold together the shoulder and platform of the 30S subunit. The protein is Small ribosomal subunit protein uS12 of Mannheimia succiniciproducens (strain KCTC 0769BP / MBEL55E).